The chain runs to 505 residues: Cyclic AMP-dependent transcription factor ATF-2 (505 aa).

Positions 1–7 match the Nuclear export signal 1 (N-NES) motif; sequence MKFKLHV. The C2H2-type zinc-finger motif lies at 25-49; the sequence is FLCTAPGCGQRFTNEDHLAVHKHKH. A Phosphothreonine; by PKC/PRKCH modification is found at T52. S62 is modified (phosphoserine; by VRK1). The residue at position 69 (T69) is a Phosphothreonine; by MAPK11 and MAPK14. T71 is subject to Phosphothreonine; by MAPK1, MAPK3, MAPK11, MAPK12, MAPK14 and PLK3. The residue at position 73 (T73) is a Phosphothreonine; by VRK1. 2 positions are modified to phosphoserine: S90 and S112. At T116 the chain carries Phosphothreonine. S121 is subject to Phosphoserine; by PKC/PRKCA and PKC/PRKCB. 2 disordered regions span residues 125-155 and 259-373; these read EPSV…PLAQ and PGIP…RQKR. Position 136 is a phosphoserine (S136). A compositionally biased stretch (polar residues) spans 282 to 293; it reads LTQQHPPVTNGD. Residues 296–299 form an essential for its histone acetyltransferase activity region; the sequence is KGHG. Positions 318–334 are enriched in low complexity; it reads PATSTTETPASPAHTTP. S328 carries the post-translational modification Phosphoserine. Phosphoserine; by PKC/PRKCA and PKC/PRKCB is present on S340. A compositionally biased stretch (basic and acidic residues) spans 346 to 363; the sequence is AANEDPDEKRRKFLERNR. One can recognise a bZIP domain in the interval 352 to 415; that stretch reads DEKRRKFLER…AQLKQLLLAH (64 aa). The basic motif stretch occupies residues 354-374; that stretch reads KRRKFLERNRAAASRCRQKRK. Position 357 is an N6-acetyllysine (K357). S367 is subject to Phosphoserine; by PKC/PRKCA and PKC/PRKCB. At K374 the chain carries N6-acetyllysine. The tract at residues 380-408 is leucine-zipper; sequence LEKKAEDLSSLNGQLQSEVTLLRNEVAQL. The Nuclear export signal 2 (C-NES) signature appears at 405 to 414; it reads VAQLKQLLLA. Positions 425–472 are disordered; that stretch reads KKSGYHTADKDDSSEDISVPSSPHTEAIQHSSVSTSNGVSSTSKAEAV. A phosphoserine mark is found at S442 and S446. Residues 443–454 show a composition bias toward polar residues; it reads VPSSPHTEAIQH. Positions 455-467 are enriched in low complexity; sequence SSVSTSNGVSSTS. 2 positions are modified to phosphoserine; by ATM: S490 and S498.

It belongs to the bZIP family. ATF subfamily. Binds DNA as a dimer and can form a homodimer in the absence of DNA. Can form a heterodimer with JUN. Heterodimerization is essential for its transcriptional activity. Interacts with SMAD3 and SMAD4. Binds through its N-terminal region to UTF1 which acts as a coactivator of ATF2 transcriptional activity. Interacts with the HK1/VDAC1 complex. Interacts with NBN, MRE11, XPO1, KAT5 and CUL3. Phosphorylation of Thr-69 by MAPK14 and MAPK11, and at Thr-71 by MAPK1/ERK2, MAPK3/ERK1, MAPK11, MAPK12 and MAPK14 in response to external stimulus like insulin causes increased transcriptional activity. Phosphorylated by PLK3 following hyperosmotic stress. Also phosphorylated and activated by JNK and CaMK4. ATM-mediated phosphorylation at Ser-490 and Ser-498 stimulates its function in DNA damage response. Phosphorylation at Ser-62, Thr-73 and Ser-121 activates its transcriptional activity. Phosphorylation at Thr-69 or Thr-71 enhances acetylation of histones H2B and H4. In terms of tissue distribution, ubiquitously expressed, with more abundant expression in the brain.

It localises to the nucleus. It is found in the cytoplasm. Its subcellular location is the mitochondrion outer membrane. Its function is as follows. Transcriptional activator which regulates the transcription of various genes, including those involved in anti-apoptosis, cell growth, and DNA damage response. Dependent on its binding partner, binds to CRE (cAMP response element) consensus sequences (5'-TGACGTCA-3') or to AP-1 (activator protein 1) consensus sequences (5'-TGACTCA-3'). In the nucleus, contributes to global transcription and the DNA damage response, in addition to specific transcriptional activities that are related to cell development, proliferation and death. In the cytoplasm, interacts with and perturbs HK1- and VDAC1-containing complexes at the mitochondrial outer membrane, thereby impairing mitochondrial membrane potential, inducing mitochondrial leakage and promoting cell death. The phosphorylated form (mediated by ATM) plays a role in the DNA damage response and is involved in the ionizing radiation (IR)-induced S phase checkpoint control and in the recruitment of the MRN complex into the IR-induced foci (IRIF). Exhibits histone acetyltransferase (HAT) activity which specifically acetylates histones H2B and H4 in vitro. In concert with CUL3 and RBX1, promotes the degradation of KAT5 thereby attenuating its ability to acetylate and activate ATM. Can elicit oncogenic or tumor suppressor activities depending on the tissue or cell type. The protein is Cyclic AMP-dependent transcription factor ATF-2 (ATF2) of Homo sapiens (Human).